We begin with the raw amino-acid sequence, 411 residues long: Phospholipase ABHD3 (411 aa).

The helical; Signal-anchor for type II membrane protein transmembrane segment at Val25–Ala45 threads the bilayer. An AB hydrolase-1 domain is found at Pro140–Ile233. Residues Ser220, Asp346, and His375 each act as charge relay system in the active site.

It belongs to the AB hydrolase superfamily. AB hydrolase 4 family. As to expression, widely expressed with higher expression in liver.

The protein localises to the membrane. It catalyses the reaction a 1,2-diacyl-sn-glycero-3-phosphocholine + H2O = a 1-acyl-sn-glycero-3-phosphocholine + a fatty acid + H(+). The catalysed reaction is a 1,2-diacyl-sn-glycero-3-phosphocholine + H2O = a 2-acyl-sn-glycero-3-phosphocholine + a fatty acid + H(+). It carries out the reaction 1-tetradecanoyl-2-(9Z,12Z-octadecadienoyl)-sn-glycero-3-phosphocholine + H2O = 2-(9Z,12Z-octadecadienoyl)-sn-glycero-3-phosphocholine + tetradecanoate + H(+). The enzyme catalyses 1-tetradecanoyl-2-(9Z,12Z-octadecadienoyl)-sn-glycero-3-phosphocholine + H2O = 1-tetradecanoyl-sn-glycero-3-phosphocholine + (9Z,12Z)-octadecadienoate + H(+). It catalyses the reaction 1-tetradecanoyl-2-(5Z,8Z,11Z,14Z-eicosatetraenoyl)-sn-glycero-3-phosphocholine + H2O = 2-(5Z,8Z,11Z,14Z)-eicosatetraenoyl-sn-glycero-3-phosphocholine + tetradecanoate + H(+). The catalysed reaction is 1-tetradecanoyl-2-(4Z,7Z,10Z,13Z,16Z,19Z-docosahexaenoyl)-sn-glycero-3-phosphocholine + H2O = 2-(4Z,7Z,10Z,13Z,16Z,19Z-docosahexaenoyl)-sn-glycero-3-phosphocholine + tetradecanoate + H(+). It carries out the reaction 1,2-ditetradecanoyl-sn-glycero-3-phosphocholine + H2O = 2-tetradecanoyl-sn-glycero-3-phosphocholine + tetradecanoate + H(+). The enzyme catalyses 1-octadecanoyl-2-acetyl-sn-glycero-3-phosphocholine + H2O = 1-octadecanoyl-sn-glycero-3-phosphocholine + acetate + H(+). It catalyses the reaction 1,2-ditetradecanoyl-sn-glycero-3-phosphocholine + H2O = 1-tetradecanoyl-sn-glycero-3-phosphocholine + tetradecanoate + H(+). The catalysed reaction is 1-octadecanoyl-2-pentanoyl-sn-glycero-3-phosphocholine + H2O = pentanoate + 1-octadecanoyl-sn-glycero-3-phosphocholine + H(+). It carries out the reaction 1-octadecanoyl-2-hexanoyl-sn-glycero-3-phosphocholine + H2O = hexanoate + 1-octadecanoyl-sn-glycero-3-phosphocholine + H(+). The enzyme catalyses 1-octadecanoyl-2-octanoyl-sn-glycero-3-phosphocholine + H2O = 1-octadecanoyl-sn-glycero-3-phosphocholine + octanoate + H(+). It catalyses the reaction 1-octadecanoyl-2-nonanoyl-sn-glycero-3-phosphocholine + H2O = nonanoate + 1-octadecanoyl-sn-glycero-3-phosphocholine + H(+). The catalysed reaction is 1-O-hexadecyl-2-nonadioyl-sn-glycero-3-phosphocholine + H2O = nonanedioate + 1-O-hexadecyl-sn-glycero-3-phosphocholine + H(+). It carries out the reaction 1-hexadecanoyl-2-nonadioyl-sn-glycero-3-phosphocholine + H2O = nonanedioate + 1-hexadecanoyl-sn-glycero-3-phosphocholine + H(+). The enzyme catalyses 1-hexadecanoyl-2-(9-oxononanoyl)-sn-glycero-3-phosphocholine + H2O = 9-oxononanoate + 1-hexadecanoyl-sn-glycero-3-phosphocholine + H(+). It catalyses the reaction 1-hexadecanoyl-2-(5-oxopentanoyl)-sn-glycero-3-phosphocholine + H2O = 5-oxopentanoate + 1-hexadecanoyl-sn-glycero-3-phosphocholine + H(+). The catalysed reaction is 1-hexadecanoyl-2-glutaroyl-sn-glycero-3-phosphocholine + H2O = glutarate + 1-hexadecanoyl-sn-glycero-3-phosphocholine + H(+). It carries out the reaction 1-O-hexadecyl-2-acetyl-sn-glycero-3-phosphocholine + H2O = 1-O-hexadecyl-sn-glycero-3-phosphocholine + acetate + H(+). In terms of biological role, phospholipase that may play a role in phospholipids remodeling. May selectively cleave myristate (C14)-containing phosphatidylcholines through its predominant phospholipase 1 activity, cleaving preferentially acyl groups in sn1 position. In parallel, may have a minor phospholipase 2 activity acting on acyl groups in position sn2. In addition to (C14)-containing phosphatidylcholines, may also act on other medium-chain-containing and oxidatively truncated phospholipids. The sequence is that of Phospholipase ABHD3 from Mus musculus (Mouse).